The following is a 217-amino-acid chain: Large ribosomal subunit protein bL25 (217 aa).

The disordered stretch occupies residues 178 to 217 (VVAPTEEPTEEEIEAMEGEQQTEEPEVVGESKEDEEKTEE). Over residues 184 to 205 (EPTEEEIEAMEGEQQTEEPEVV) the composition is skewed to acidic residues. Residues 206–217 (GESKEDEEKTEE) are compositionally biased toward basic and acidic residues.

This sequence belongs to the bacterial ribosomal protein bL25 family. CTC subfamily. As to quaternary structure, part of the 50S ribosomal subunit; part of the 5S rRNA/L5/L18/L25 subcomplex. Contacts the 5S rRNA. Binds to the 5S rRNA independently of L5 and L18.

Its function is as follows. This is one of the proteins that binds to the 5S RNA in the ribosome where it forms part of the central protuberance. This Staphylococcus aureus (strain USA300) protein is Large ribosomal subunit protein bL25.